Consider the following 233-residue polypeptide: 5'-methylthioadenosine/S-adenosylhomocysteine nucleosidase (233 aa).

The active-site Proton acceptor is E12. Residues G78, I152, and 173 to 174 (ME) each bind substrate. D197 (proton donor) is an active-site residue.

Belongs to the PNP/UDP phosphorylase family. MtnN subfamily. As to quaternary structure, homodimer.

The enzyme catalyses S-adenosyl-L-homocysteine + H2O = S-(5-deoxy-D-ribos-5-yl)-L-homocysteine + adenine. It catalyses the reaction S-methyl-5'-thioadenosine + H2O = 5-(methylsulfanyl)-D-ribose + adenine. It carries out the reaction 5'-deoxyadenosine + H2O = 5-deoxy-D-ribose + adenine. It participates in amino-acid biosynthesis; L-methionine biosynthesis via salvage pathway; S-methyl-5-thio-alpha-D-ribose 1-phosphate from S-methyl-5'-thioadenosine (hydrolase route): step 1/2. Functionally, catalyzes the irreversible cleavage of the glycosidic bond in both 5'-methylthioadenosine (MTA) and S-adenosylhomocysteine (SAH/AdoHcy) to adenine and the corresponding thioribose, 5'-methylthioribose and S-ribosylhomocysteine, respectively. Also cleaves 5'-deoxyadenosine, a toxic by-product of radical S-adenosylmethionine (SAM) enzymes, into 5-deoxyribose and adenine. Thus, is required for in vivo function of the radical SAM enzymes biotin synthase and lipoic acid synthase, that are inhibited by 5'-deoxyadenosine accumulation. The polypeptide is 5'-methylthioadenosine/S-adenosylhomocysteine nucleosidase (Yersinia pestis bv. Antiqua (strain Angola)).